The sequence spans 1006 residues: SAC3 family protein A (1006 aa).

Disordered stretches follow at residues 1–75 (MNHG…GPAT), 106–162 (TPYQ…PGSY), 183–239 (GYQS…TIAT), 266–326 (GTEK…AVST), 516–550 (TVTT…RWEP), 595–638 (GFKP…SDKD), and 650–690 (AGSA…GNLH). Polar residues-rich tracts occupy residues 26-75 (GSQT…GPAT) and 106-115 (TPYQTSSDPH). Residues 116–140 (NYSNTGYSNYYSGYQQQPSQSYPQP) show a composition bias toward low complexity. Polar residues predominate over residues 144-162 (YQNTGAPQPLSSFQNPGSY). Polar residues-rich tracts occupy residues 269–282 (KLST…SQSF) and 313–326 (SHPP…AVST). Residues 516-539 (TVTTTNVTNSESSSAQLSSLQNKS) show a composition bias toward low complexity. Basic residues predominate over residues 609-618 (SFQRPVKRQR). Residues 653-680 (AEEKKRRDSRSKRFEKIQGHSRGNDLTK) are compositionally biased toward basic and acidic residues. Positions 804 to 978 (DLPEYNQCLS…DMLLDTKATS (175 aa)) constitute a PCI domain.

Belongs to the SAC3 family. In terms of assembly, interacts with EER5, SAC3B and CML20.

The protein resides in the nucleus. Functionally, component of the TREX-2 complex (transcription and export complex 2), a muliprotein complex that functions in docking export-competent ribonucleoprotein particles (mRNPs) to the nuclear entrance of the nuclear pore complex (nuclear basket). TREX-2 participates in mRNA export and accurate chromatin positioning in the nucleus by tethering genes to the nuclear periphery. The chain is SAC3 family protein A from Arabidopsis thaliana (Mouse-ear cress).